Consider the following 1802-residue polypeptide: Bromodomain and WD repeat-containing protein 3 (1802 aa).

8 WD repeats span residues 170–209 (IKMH…IWAT), 213–251 (RLLA…VWCL), 255–297 (APVA…FWQW), 307–347 (RPVK…IYYL), 353–393 (EKIA…IWQY), 400–452 (SIVL…VWNS), 456–495 (QLLH…IWDL), and 502–542 (RNYF…LFGF). 2 positions are modified to phosphoserine: serine 693 and serine 703. The tract at residues 768 to 910 (KPSYTTQRND…PKQTRKKKGG (143 aa)) is disordered. The span at 785–795 (SLRRTQRKRQH) shows a compositional bias: basic residues. The span at 796-817 (TYQTRSNIEHNSQASCQNSGVQ) shows a compositional bias: polar residues. Over residues 818-829 (EDSDSSSEEDET) the composition is skewed to acidic residues. Over residues 846-859 (SESSSSDSSSEYSD) the composition is skewed to low complexity. Phosphoserine is present on residues serine 885 and serine 886. The span at 889–898 (ENLKSLEERQ) shows a compositional bias: basic and acidic residues. Residues 899–909 (KKPKQTRKKKG) show a composition bias toward basic residues. The Bromo 1 domain occupies 1138-1245 (WGAHSRDEEC…DVLLRFIGDQ (108 aa)). Disordered stretches follow at residues 1262–1292 (RNST…VKCR), 1326–1361 (RQPA…LSED), 1438–1500 (IQSQ…SPVS), and 1520–1725 (SSSS…RAKR). The segment covering 1266–1278 (DAEEDTEIVDLDS) has biased composition (acidic residues). The Bromo 2 domain maps to 1300–1430 (CNPDAWKKQC…ALFESHIKNI (131 aa)). Basic residues predominate over residues 1441–1453 (QKRRRPRYRKRLR). Residues 1454–1468 (SSSSSLSSSGAPSPK) are compositionally biased toward low complexity. Over residues 1479–1499 (KNDQNTSVSHARTSSPFSSPV) the composition is skewed to polar residues. Over residues 1520-1533 (SSSSFGGYSRSGNS) the composition is skewed to low complexity. Residues serine 1577 and serine 1579 each carry the phosphoserine modification. The segment covering 1587–1600 (GEDKEKKETKEKSH) has biased composition (basic and acidic residues). Residues 1601 to 1626 (LSTSESGELGSSLSSESTCGSDSDSE) are compositionally biased toward low complexity. The span at 1627–1643 (STSRTDQDYVDGDHDYS) shows a compositional bias: basic and acidic residues. Basic residues-rich tracts occupy residues 1649-1666 (RPKR…RNWK) and 1684-1697 (RGGR…RGSR). Phosphoserine is present on serine 1763.

In terms of tissue distribution, found in most adult tissues. Down-regulated in a majority of the B-CLL cases examined.

In terms of biological role, plays a role in the regulation of cell morphology and cytoskeletal organization. Required in the control of cell shape. The chain is Bromodomain and WD repeat-containing protein 3 (BRWD3) from Homo sapiens (Human).